The primary structure comprises 214 residues: Thymidylate kinase (214 aa).

G11–T18 contributes to the ATP binding site.

The protein belongs to the thymidylate kinase family.

It catalyses the reaction dTMP + ATP = dTDP + ADP. Phosphorylation of dTMP to form dTDP in both de novo and salvage pathways of dTTP synthesis. The sequence is that of Thymidylate kinase from Leuconostoc citreum (strain KM20).